Consider the following 303-residue polypeptide: Golgi to ER traffic protein 2 (303 aa).

Over 1-168 (MSEQPLSQDE…NAYNIYQQRL (168 aa)) the chain is Cytoplasmic. A disordered region spans residues 19–86 (RQAKMARGKA…DPEDDPDLMD (68 aa)). Polar residues predominate over residues 31-48 (RLNNILSQGSSVKGTTDP). A helical transmembrane segment spans residues 169 to 189 (WKFRFSIIRFAAVLTNFFYHY). The Lumenal segment spans residues 190–216 (LTIQDYSFTSSPHFYVRALAPHPAVNS). The helical transmembrane segment at 217-236 (FITWFSTCEVAILASFYLIT) threads the bilayer. At 237-280 (SKNNIYANASDGNLLLKGISMGAMVLPQLRAYQPLVIRLAHYWE) the chain is on the cytoplasmic side. The chain crosses the membrane as a helical span at residues 281–301 (VFSMLLGDIFLVVVLFGLVSI). Over 302–303 (YN) the chain is Lumenal.

This sequence belongs to the GET2 family. In terms of assembly, component of the Golgi to ER traffic (GET) complex, which is composed of GET1, GET2 and GET3. Within the complex, GET1 and GET2 form a heterotetramer which is stabilized by phosphatidylinositol binding and which binds to the GET3 homodimer.

The protein localises to the endoplasmic reticulum membrane. It localises to the golgi apparatus membrane. Required for the post-translational delivery of tail-anchored (TA) proteins to the endoplasmic reticulum. Together with GET1, acts as a membrane receptor for soluble GET3, which recognizes and selectively binds the transmembrane domain of TA proteins in the cytosol. The GET complex cooperates with the HDEL receptor ERD2 to mediate the ATP-dependent retrieval of resident ER proteins that contain a C-terminal H-D-E-L retention signal from the Golgi to the ER. The polypeptide is Golgi to ER traffic protein 2 (Debaryomyces hansenii (strain ATCC 36239 / CBS 767 / BCRC 21394 / JCM 1990 / NBRC 0083 / IGC 2968) (Yeast)).